A 72-amino-acid polypeptide reads, in one-letter code: UPF0270 protein YheU (72 aa).

It belongs to the UPF0270 family.

The polypeptide is UPF0270 protein YheU (Salmonella choleraesuis (strain SC-B67)).